The chain runs to 420 residues: UDP-N-acetylglucosamine 1-carboxyvinyltransferase (420 aa).

22-23 (KN) is a binding site for phosphoenolpyruvate. R93 is a UDP-N-acetyl-alpha-D-glucosamine binding site. Residue C117 is the Proton donor of the active site. At C117 the chain carries 2-(S-cysteinyl)pyruvic acid O-phosphothioketal. 2 residues coordinate UDP-N-acetyl-alpha-D-glucosamine: D307 and I329.

The protein belongs to the EPSP synthase family. MurA subfamily.

It is found in the cytoplasm. The catalysed reaction is phosphoenolpyruvate + UDP-N-acetyl-alpha-D-glucosamine = UDP-N-acetyl-3-O-(1-carboxyvinyl)-alpha-D-glucosamine + phosphate. It participates in cell wall biogenesis; peptidoglycan biosynthesis. Cell wall formation. Adds enolpyruvyl to UDP-N-acetylglucosamine. The protein is UDP-N-acetylglucosamine 1-carboxyvinyltransferase of Cellvibrio japonicus (strain Ueda107) (Pseudomonas fluorescens subsp. cellulosa).